The following is a 365-amino-acid chain: Methionine import ATP-binding protein MetN (365 aa).

Positions 17–256 (IVFEHVTKEF…PQSETTQRFL (240 aa)) constitute an ABC transporter domain. Residue 53–60 (GHSGAGKS) participates in ATP binding. The disordered stretch occupies residues 346–365 (SNSAAPTTSATVPTPTEEAH).

The protein belongs to the ABC transporter superfamily. Methionine importer (TC 3.A.1.24) family. The complex is composed of two ATP-binding proteins (MetN), two transmembrane proteins (MetI) and a solute-binding protein (MetQ).

The protein resides in the cell membrane. It catalyses the reaction L-methionine(out) + ATP + H2O = L-methionine(in) + ADP + phosphate + H(+). The catalysed reaction is D-methionine(out) + ATP + H2O = D-methionine(in) + ADP + phosphate + H(+). Functionally, part of the ABC transporter complex MetNIQ involved in methionine import. Responsible for energy coupling to the transport system. The chain is Methionine import ATP-binding protein MetN from Cutibacterium acnes (strain DSM 16379 / KPA171202) (Propionibacterium acnes).